The sequence spans 337 residues: Phosphate acyltransferase (337 aa).

The protein belongs to the PlsX family. In terms of assembly, homodimer. Probably interacts with PlsY.

Its subcellular location is the cytoplasm. It catalyses the reaction a fatty acyl-[ACP] + phosphate = an acyl phosphate + holo-[ACP]. It participates in lipid metabolism; phospholipid metabolism. In terms of biological role, catalyzes the reversible formation of acyl-phosphate (acyl-PO(4)) from acyl-[acyl-carrier-protein] (acyl-ACP). This enzyme utilizes acyl-ACP as fatty acyl donor, but not acyl-CoA. The sequence is that of Phosphate acyltransferase from Acidobacterium capsulatum (strain ATCC 51196 / DSM 11244 / BCRC 80197 / JCM 7670 / NBRC 15755 / NCIMB 13165 / 161).